The chain runs to 347 residues: Isopentenyl-diphosphate delta-isomerase (347 aa).

5 to 6 (RK) serves as a coordination point for substrate. FMN contacts are provided by residues Ser-61, 62-64 (SMT), Ser-92, and Asn-120. 92-94 (SMR) is a binding site for substrate. Position 159 (Gln-159) interacts with substrate. Residue Glu-160 participates in Mg(2+) binding. FMN contacts are provided by residues Lys-189, Ser-214, Thr-219, 269-271 (GLR), and 290-291 (AR).

Belongs to the IPP isomerase type 2 family. As to quaternary structure, homooctamer. Dimer of tetramers. FMN is required as a cofactor. It depends on NADPH as a cofactor. Requires Mg(2+) as cofactor.

The protein localises to the cytoplasm. It catalyses the reaction isopentenyl diphosphate = dimethylallyl diphosphate. Involved in the biosynthesis of isoprenoids. Catalyzes the 1,3-allylic rearrangement of the homoallylic substrate isopentenyl (IPP) to its allylic isomer, dimethylallyl diphosphate (DMAPP). The chain is Isopentenyl-diphosphate delta-isomerase from Thermoplasma volcanium (strain ATCC 51530 / DSM 4299 / JCM 9571 / NBRC 15438 / GSS1).